A 1521-amino-acid polypeptide reads, in one-letter code: uncharacterized protein (1521 aa).

Disordered regions lie at residues 1–20 (MENN…NSNN), 85–124 (TFQS…NNNN), 218–254 (ASSP…SSSS), 431–482 (VLNS…TGIT), and 735–797 (NNNN…HQQQ). Low complexity-rich tracts occupy residues 94 to 108 (NTSS…QNNP), 219 to 254 (SSPS…SSSS), and 431 to 454 (VLNS…NNTS). Residues 455-464 (PAIVTSASIH) show a composition bias toward polar residues. Low complexity-rich tracts occupy residues 465–482 (NSNG…TGIT) and 735–762 (NNNN…NNIL). Over residues 763–774 (SNTLTSSLINEP) the composition is skewed to polar residues. Residues 775-788 (NQQHQHQQHQQQNQ) are compositionally biased toward low complexity. Residues 853–903 (IVNSQQQQQQQQQQQQQQQQQQQQQQQQQQQQQQQQQQQQQQHNNTQNINN) adopt a coiled-coil conformation. Residues 1398 to 1453 (QQPLPTSKTSSSSSSTSSEATPYLSSSVPPSIVTSTPSTTPMISSSNPNTSSLPTS) are compositionally biased toward low complexity. Residues 1398-1455 (QQPLPTSKTSSSSSSTSSEATPYLSSSVPPSIVTSTPSTTPMISSSNPNTSSLPTSER) form a disordered region.

This is an uncharacterized protein from Dictyostelium discoideum (Social amoeba).